Here is a 94-residue protein sequence, read N- to C-terminus: Aspartyl/glutamyl-tRNA(Asn/Gln) amidotransferase subunit C (94 aa).

The protein belongs to the GatC family. As to quaternary structure, heterotrimer of A, B and C subunits.

The catalysed reaction is L-glutamyl-tRNA(Gln) + L-glutamine + ATP + H2O = L-glutaminyl-tRNA(Gln) + L-glutamate + ADP + phosphate + H(+). It catalyses the reaction L-aspartyl-tRNA(Asn) + L-glutamine + ATP + H2O = L-asparaginyl-tRNA(Asn) + L-glutamate + ADP + phosphate + 2 H(+). Allows the formation of correctly charged Asn-tRNA(Asn) or Gln-tRNA(Gln) through the transamidation of misacylated Asp-tRNA(Asn) or Glu-tRNA(Gln) in organisms which lack either or both of asparaginyl-tRNA or glutaminyl-tRNA synthetases. The reaction takes place in the presence of glutamine and ATP through an activated phospho-Asp-tRNA(Asn) or phospho-Glu-tRNA(Gln). The protein is Aspartyl/glutamyl-tRNA(Asn/Gln) amidotransferase subunit C of Caldicellulosiruptor saccharolyticus (strain ATCC 43494 / DSM 8903 / Tp8T 6331).